We begin with the raw amino-acid sequence, 104 residues long: MKPYALLSLLATGTLLAQGAWAEDPEVLFKNKGCVACHAIDTKMVGPAYKDVAAKFAGQAGAEAELAQRIKNGSQGVWGPIPMPPNAVSDDEAQTLAKWVLSQK.

The N-terminal stretch at 1-22 is a signal peptide; the sequence is MKPYALLSLLATGTLLAQGAWA. Positions 34, 37, 38, and 83 each coordinate heme c.

Binds 1 heme c group covalently per subunit.

Its subcellular location is the periplasm. Its function is as follows. Electron donor for cytochrome cd1 in nitrite and nitrate respiration. This Pseudomonas aeruginosa (strain ATCC 15692 / DSM 22644 / CIP 104116 / JCM 14847 / LMG 12228 / 1C / PRS 101 / PAO1) protein is Cytochrome c-551 (nirM).